A 96-amino-acid chain; its full sequence is Salivary protein FS50 (96 aa).

An N-terminal signal peptide occupies residues Met1–Ser19. 4 disulfide bridges follow: Cys26–Cys71, Cys50–Cys78, Cys63–Cys91, and Cys67–Cys93.

The protein resides in the secreted. In terms of biological role, salivary protein that inhibits host voltage-gated sodium channel Nav1.5/SCN5A. This chain is Salivary protein FS50, found in Xenopsylla cheopis (Oriental rat flea).